Reading from the N-terminus, the 122-residue chain is Holo-[acyl-carrier-protein] synthase (122 aa).

Mg(2+) is bound by residues D8 and E56.

Belongs to the P-Pant transferase superfamily. AcpS family. It depends on Mg(2+) as a cofactor.

It localises to the cytoplasm. The enzyme catalyses apo-[ACP] + CoA = holo-[ACP] + adenosine 3',5'-bisphosphate + H(+). Its function is as follows. Transfers the 4'-phosphopantetheine moiety from coenzyme A to a Ser of acyl-carrier-protein. This is Holo-[acyl-carrier-protein] synthase from Alkaliphilus oremlandii (strain OhILAs) (Clostridium oremlandii (strain OhILAs)).